The following is a 419-amino-acid chain: Imidazolonepropionase (419 aa).

Fe(3+) contacts are provided by His-82 and His-84. Zn(2+) is bound by residues His-82 and His-84. Positions 91, 154, and 187 each coordinate 4-imidazolone-5-propanoate. Tyr-154 contacts N-formimidoyl-L-glutamate. A Fe(3+)-binding site is contributed by His-252. Zn(2+) is bound at residue His-252. 4-imidazolone-5-propanoate is bound at residue Glu-255. Asp-326 provides a ligand contact to Fe(3+). Asp-326 contributes to the Zn(2+) binding site. N-formimidoyl-L-glutamate is bound by residues Asn-328 and Gly-330. Ser-331 serves as a coordination point for 4-imidazolone-5-propanoate.

This sequence belongs to the metallo-dependent hydrolases superfamily. HutI family. Zn(2+) serves as cofactor. Requires Fe(3+) as cofactor.

It localises to the cytoplasm. It catalyses the reaction 4-imidazolone-5-propanoate + H2O = N-formimidoyl-L-glutamate. The protein operates within amino-acid degradation; L-histidine degradation into L-glutamate; N-formimidoyl-L-glutamate from L-histidine: step 3/3. Its function is as follows. Catalyzes the hydrolytic cleavage of the carbon-nitrogen bond in imidazolone-5-propanoate to yield N-formimidoyl-L-glutamate. It is the third step in the universal histidine degradation pathway. This chain is Imidazolonepropionase, found in Clostridium tetani (strain Massachusetts / E88).